The primary structure comprises 149 residues: Calmodulin-6 (149 aa).

EF-hand domains follow at residues 8–43 (DQIS…LGQN), 44–79 (PTEA…KMKD), 81–116 (DSEE…LGEK), and 117–149 (LSDE…MMAK). Residues Asp21, Asp23, Asp25, Cys27, Glu32, Asp57, Asp59, Asn61, Thr63, Glu68, Asp94, Asp96, Asn98, Glu105, Asp130, Asp132, Asp134, Gln136, and Glu141 each contribute to the Ca(2+) site.

The protein belongs to the calmodulin family. In terms of assembly, interacts with KCBP.

Its function is as follows. Calmodulin mediates the control of a large number of enzymes, ion channels and other proteins by Ca(2+). Among the enzymes to be stimulated by the calmodulin-Ca(2+) complex are a number of protein kinases and phosphatases. The protein is Calmodulin-6 (CAM6) of Arabidopsis thaliana (Mouse-ear cress).